We begin with the raw amino-acid sequence, 97 residues long: Mitochondrial import inner membrane translocase subunit Tim8 A (97 aa).

The Twin CX3C motif motif lies at 43–66 (CWEKCMDKPGPKLDSRAEACFVNC). Intrachain disulfides connect cysteine 43–cysteine 66 and cysteine 47–cysteine 62. Serine 57, serine 87, serine 94, and serine 96 each carry phosphoserine.

This sequence belongs to the small Tim family. In terms of assembly, heterohexamer; composed of 3 copies of TIMM8A and 3 copies of TIMM13, named soluble 70 kDa complex. Associates with the TIM22 complex, whose core is composed of TIMM22.

The protein resides in the mitochondrion inner membrane. Mitochondrial intermembrane chaperone that participates in the import and insertion of some multi-pass transmembrane proteins into the mitochondrial inner membrane. Also required for the transfer of beta-barrel precursors from the TOM complex to the sorting and assembly machinery (SAM complex) of the outer membrane. Acts as a chaperone-like protein that protects the hydrophobic precursors from aggregation and guide them through the mitochondrial intermembrane space. The TIMM8-TIMM13 complex mediates the import of proteins such as TIMM23, SLC25A12/ARALAR1 and SLC25A13/ARALAR2, while the predominant TIMM9-TIMM10 70 kDa complex mediates the import of much more proteins. The polypeptide is Mitochondrial import inner membrane translocase subunit Tim8 A (TIMM8A) (Bos taurus (Bovine)).